A 592-amino-acid chain; its full sequence is MWRTRWEDGAPTFTRNDEFLYCHTRYETFLRVMGDFQGIFECQYSADVLRDWVRNHVDQVLSLGIPHNWFLQVRPGSTMPELRDQLLDDVICCPERLIVLGKCVIMVDDHYEETELVLCMGGGTRLYIYEPSQEILLLCARHLDELARYGMMYTEAVYRQPQTPFATRVPHDVVAMLLRHGHDTDALAACVGEHHGRDVNFHTPGRHAKTLKLLTSFGCLTDCWPFEVAPAARLAECEMYVTLQLRCRWYLLGAVGSYRAGGFFDTSFLIIFDRFCRFYVVIVKSHLDRSPPLQRLAGEIYRLADSLEELFRAGLMKVYVRRRYEHGLRRAARLERNGGCVHMGEAARLHFTMFDSGVDRDYARQFRWLCRGDRFRAEMLNNWDGWDAFTIWQARVVRGDFAERRRPRSLGDGEEEDEGNDGRAMPVVRRRPPPMPRDDDEDNHVVPDNQNLEVIHDALADDEEQGEDDDDSGAEPMEPEENNVVPNVDRRGGEDAVAARMAAGHESDDDEWEDLGFDLEEDTVFDLKDVDEWFEQRRLAEKERWHLGQRIVNAYRTEAEVSEAEVEARRINLNTDLSPEWVKSFDFREHFV.

Positions Pro407–Arg491 are disordered. Positions Ala460–Glu481 are enriched in acidic residues.

Belongs to the herpesviridae US22 family.

It localises to the virion tegument. This Homo sapiens (Human) protein is Protein US23 (US23).